The sequence spans 567 residues: Oxygen-dependent choline dehydrogenase (567 aa).

Position 4 to 33 (4 to 33 (DYIIIGAGSAGNVLAARLTEDADVTVLLLE)) interacts with FAD. The Proton acceptor role is filled by histidine 473.

This sequence belongs to the GMC oxidoreductase family. FAD serves as cofactor.

It carries out the reaction choline + A = betaine aldehyde + AH2. It catalyses the reaction betaine aldehyde + NAD(+) + H2O = glycine betaine + NADH + 2 H(+). Its pathway is amine and polyamine biosynthesis; betaine biosynthesis via choline pathway; betaine aldehyde from choline (cytochrome c reductase route): step 1/1. Involved in the biosynthesis of the osmoprotectant glycine betaine. Catalyzes the oxidation of choline to betaine aldehyde and betaine aldehyde to glycine betaine at the same rate. The chain is Oxygen-dependent choline dehydrogenase from Yersinia pestis (strain Pestoides F).